A 103-amino-acid chain; its full sequence is Small ribosomal subunit protein uS10 (103 aa).

It belongs to the universal ribosomal protein uS10 family. Part of the 30S ribosomal subunit.

In terms of biological role, involved in the binding of tRNA to the ribosomes. This Shewanella denitrificans (strain OS217 / ATCC BAA-1090 / DSM 15013) protein is Small ribosomal subunit protein uS10.